Here is a 278-residue protein sequence, read N- to C-terminus: Putative phosphatase MG265 (278 aa).

The active-site Nucleophile is the aspartate 9. Mg(2+) is bound at residue aspartate 9. Position 10 (leucine 10) interacts with phosphate. Aspartate 11 serves as a coordination point for Mg(2+). Phosphate-binding positions include 43 to 44 and lysine 204; that span reads SG. A Mg(2+)-binding site is contributed by aspartate 227. Asparagine 230 provides a ligand contact to phosphate.

Belongs to the HAD-like hydrolase superfamily. Cof family. It depends on Mg(2+) as a cofactor.

In Mycoplasma genitalium (strain ATCC 33530 / DSM 19775 / NCTC 10195 / G37) (Mycoplasmoides genitalium), this protein is Putative phosphatase MG265.